A 349-amino-acid chain; its full sequence is Interferon regulatory factor 2 (349 aa).

A DNA-binding region (IRF tryptophan pentad repeat) is located at residues 5–113; that stretch reads RMRMRPWLEE…NAFRVYRMLP (109 aa). N6-acetyllysine occurs at positions 75 and 78. The tract at residues 117–148 is disordered; that stretch reads RPSKKGKKPKTEKEDKVKHIKQEPVESSLGLS. The span at 125-140 shows a compositional bias: basic and acidic residues; sequence PKTEKEDKVKHIKQEP. Lys137 is covalently cross-linked (Glycyl lysine isopeptide (Lys-Gly) (interchain with G-Cter in SUMO); alternate). A Glycyl lysine isopeptide (Lys-Gly) (interchain with G-Cter in SUMO2); alternate cross-link involves residue Lys137. Lys166 is covalently cross-linked (Glycyl lysine isopeptide (Lys-Gly) (interchain with G-Cter in SUMO)). At Ser225 the chain carries Phosphoserine. Polar residues predominate over residues 228-239; that stretch reads SSYAESETTDSV. Positions 228–251 are disordered; sequence SSYAESETTDSVPSDEESAEGRPH. Residue Lys260 forms a Glycyl lysine isopeptide (Lys-Gly) (interchain with G-Cter in SUMO2) linkage. Residue Lys293 forms a Glycyl lysine isopeptide (Lys-Gly) (interchain with G-Cter in SUMO) linkage. A disordered region spans residues 297-349; sequence NPVPYNSSWPPFQDLPLSSSMTPASSSSRPDRETRASVIKKTSDITQARVKSC. Positions 314-324 are enriched in low complexity; sequence SSSMTPASSSS.

Belongs to the IRF family. In terms of assembly, interacts with BRD7, IRF2BP1 and IRF2BP2. Interacts with CREBBP in growing cells; the interaction acetylates IRF2 and regulates IRF2-dependent H4 promoter activity. In terms of processing, acetylated by CBP/ p300 during cell-growth. Acetylation on Lys-75 is required for stimulation of H4 promoter activity. Post-translationally, the major sites of sumoylation are Lys-137 and Lys-293. Sumoylation with SUMO1 increases its transcriptional repressor activity on IRF1 and diminishes its ability to activate ISRE and H4 promoter. Expressed throughout the epithelium of the colon. Also expressed in lamina propria.

The protein resides in the nucleus. Its function is as follows. Specifically binds to the upstream regulatory region of type I IFN and IFN-inducible MHC class I genes (the interferon consensus sequence (ICS)) and represses those genes. Also acts as an activator for several genes including H4 and IL7. Constitutively binds to the ISRE promoter to activate IL7. Involved in cell cycle regulation through binding the site II (HiNF-M) promoter region of H4 and activating transcription during cell growth. Antagonizes IRF1 transcriptional activation. This Homo sapiens (Human) protein is Interferon regulatory factor 2 (IRF2).